The primary structure comprises 369 residues: 4-hydroxy-3-methylbut-2-en-1-yl diphosphate synthase (flavodoxin) (369 aa).

C270, C273, C305, and E312 together coordinate [4Fe-4S] cluster.

It belongs to the IspG family. [4Fe-4S] cluster serves as cofactor.

The enzyme catalyses (2E)-4-hydroxy-3-methylbut-2-enyl diphosphate + oxidized [flavodoxin] + H2O + 2 H(+) = 2-C-methyl-D-erythritol 2,4-cyclic diphosphate + reduced [flavodoxin]. It functions in the pathway isoprenoid biosynthesis; isopentenyl diphosphate biosynthesis via DXP pathway; isopentenyl diphosphate from 1-deoxy-D-xylulose 5-phosphate: step 5/6. Functionally, converts 2C-methyl-D-erythritol 2,4-cyclodiphosphate (ME-2,4cPP) into 1-hydroxy-2-methyl-2-(E)-butenyl 4-diphosphate. The sequence is that of 4-hydroxy-3-methylbut-2-en-1-yl diphosphate synthase (flavodoxin) from Pseudomonas syringae pv. syringae (strain B728a).